The chain runs to 85 residues: Cell division topological specificity factor (85 aa).

It belongs to the MinE family.

Prevents the cell division inhibition by proteins MinC and MinD at internal division sites while permitting inhibition at polar sites. This ensures cell division at the proper site by restricting the formation of a division septum at the midpoint of the long axis of the cell. The sequence is that of Cell division topological specificity factor from Cellvibrio japonicus (strain Ueda107) (Pseudomonas fluorescens subsp. cellulosa).